The primary structure comprises 529 residues: NADPH-dependent thioredoxin reductase 3 (529 aa).

The N-terminal 67 residues, 1-67 (MAASPKIGIG…SSDSLRLRVS (67 aa)), are a transit peptide targeting the chloroplast. Residues 54 to 78 (TRTRSSDSLRLRVSATANSPSSSSS) form a disordered region. Residues 64-78 (LRVSATANSPSSSSS) show a composition bias toward low complexity. FAD contacts are provided by residues 91–94 (SGPA), 113–120 (EGYQMGGV), asparagine 133, valine 166, and cysteine 220. A disulfide bridge links cysteine 217 with cysteine 220. Threonine 240, arginine 265, isoleucine 324, and tyrosine 344 together coordinate NADP(+). FAD contacts are provided by residues aspartate 364 and 371-374 (RQAV). Arginine 371 contributes to the NADP(+) binding site. Positions 403-529 (PQTEEAKKEF…EYREFIEANK (127 aa)) constitute a Thioredoxin domain. Residues cysteine 454 and cysteine 457 each act as nucleophile in the active site. Cysteine 454 and cysteine 457 are oxidised to a cystine.

It belongs to the class-II pyridine nucleotide-disulfide oxidoreductase family. In terms of assembly, may homodimerize. Interacts with the 2-Cys peroxiredoxin BAS1. It depends on FAD as a cofactor.

The protein resides in the plastid. It localises to the chloroplast. It catalyses the reaction [thioredoxin]-dithiol + NADP(+) = [thioredoxin]-disulfide + NADPH + H(+). Thioredoxin reductase (TR) that exhibits both TR and thioredoxin (Trx) activities. Contains a C-terminal functional Trx domain. Functions as an electron donor for plastidial 2-Cys peroxiredoxins and participates in a NADPH-dependent hydrogen peroxide scavenging system in chloroplasts in the dark. Required for chlorophyll biosynthesis and biogenesis of the photosynthetic apparatus. Activates aerobic cyclase which converts Mg-protoporhyrin monomethyl ester into protochlorophyllide. Involved in a light-dependent regulation of starch biosynthesis by redox activation of the ADP-glucose pyrophosphorylase (AGPase), a central enzyme of starch synthesis. The protein is NADPH-dependent thioredoxin reductase 3 of Arabidopsis thaliana (Mouse-ear cress).